Consider the following 432-residue polypeptide: Serine/threonine-protein kinase CDG1 (432 aa).

S-palmitoyl cysteine attachment occurs at residues Cys4 and Cys6. Positions 15–24 are enriched in basic residues; sequence LKDKSHKRSI. Residues 15–47 are disordered; sequence LKDKSHKRSIRNQTSSSSAQPAGTAKEVDSSSS. Residues 25–35 show a composition bias toward polar residues; the sequence is RNQTSSSSAQP. Phosphoserine occurs at positions 44 and 47. A Protein kinase domain is found at 74–354; the sequence is FRNESLIGRG…SQVVECLKYI (281 aa). Residues 80 to 88 and Lys102 each bind ATP; that span reads IGRGGFGTV. The residue at position 147 (Tyr147) is a Phosphotyrosine. Residue Asp200 is the Proton acceptor of the active site. Phosphoserine is present on residues Ser204 and Ser234. Phosphothreonine is present on residues Thr235 and Thr240. The residue at position 248 (Tyr248) is a Phosphotyrosine.

The protein belongs to the protein kinase superfamily. Ser/Thr protein kinase family. As to quaternary structure, interacts with BSU1, BSL1 and BRI1. Phosphorylated at Ser-44, Ser-47 and Ser-234 by BRI1. As to expression, expressed at high levels in the stamen and pollen grains. Expressed at a very low level in vegetative tissues.

It localises to the cell membrane. It catalyses the reaction L-seryl-[protein] + ATP = O-phospho-L-seryl-[protein] + ADP + H(+). The enzyme catalyses L-threonyl-[protein] + ATP = O-phospho-L-threonyl-[protein] + ADP + H(+). Activated by phosphorylation at Ser-234. Its function is as follows. Serine/threonine-protein kinase involved in the positive regulation of brassinosteroid (BR) signaling and plant growth. Mediates BR signal transduction from BRI1 receptor kinase to BSU1 phosphatase. After activation by phosphorylation at Ser-234 by BRI1, CDG1 phosphorylates BSU1 at 'Ser-764' in the phosphatase domain, increasing the ability of BSU1 to inactivate the negative regulator of BR signaling ASK7/BIN2 by dephosphorylation at 'Tyr-200'. The full kinase activity of CDG1 is required for its biological function. This Arabidopsis thaliana (Mouse-ear cress) protein is Serine/threonine-protein kinase CDG1.